The sequence spans 444 residues: Aspartate--tRNA(Asp/Asn) ligase (444 aa).

Glu176 is a binding site for L-aspartate. Residues 198–201 form an aspartate region; sequence QLFK. Arg220 contributes to the L-aspartate binding site. Residues 220–222, 228–230, and Glu367 contribute to the ATP site; these read RAE and RHL. Mg(2+)-binding residues include Glu367 and Ser370. L-aspartate-binding residues include Ser370 and Arg374. 415–418 is an ATP binding site; the sequence is GCER.

It belongs to the class-II aminoacyl-tRNA synthetase family. Type 2 subfamily. In terms of assembly, homodimer. Mg(2+) serves as cofactor.

It is found in the cytoplasm. It catalyses the reaction tRNA(Asx) + L-aspartate + ATP = L-aspartyl-tRNA(Asx) + AMP + diphosphate. Functionally, aspartyl-tRNA synthetase with relaxed tRNA specificity since it is able to aspartylate not only its cognate tRNA(Asp) but also tRNA(Asn). Reaction proceeds in two steps: L-aspartate is first activated by ATP to form Asp-AMP and then transferred to the acceptor end of tRNA(Asp/Asn). The polypeptide is Aspartate--tRNA(Asp/Asn) ligase (Methanosarcina barkeri (strain Fusaro / DSM 804)).